The sequence spans 309 residues: Putative lipid kinase YtlR (309 aa).

One can recognise a DAGKc domain in the interval 1–134 (MSHWFFIINP…FHLGSVNFLQ (134 aa)). ATP contacts are provided by residues 9–13 (NPTAG), T40, and 69–75 (GDGTMHE). Positions 229, 232, and 234 each coordinate Mg(2+). The active-site Proton acceptor is the E289.

This sequence belongs to the diacylglycerol/lipid kinase family. The cofactor is Mg(2+).

Functionally, may catalyze the ATP-dependent phosphorylation of lipids other than diacylglycerol (DAG). In fact, is not able to exhibit diacylglycerol kinase activity in vitro. In Bacillus subtilis (strain 168), this protein is Putative lipid kinase YtlR (ytlR).